We begin with the raw amino-acid sequence, 655 residues long: Cyclomaltodextrin glucanotransferase (655 aa).

Residues 1-30 form the signal peptide; that stretch reads MKRNRFFNTSAAIAISIALNTFFCSMQTIA. Asp-55, Asn-60, Asn-61, Gly-79, and Asp-81 together coordinate Ca(2+). 123 to 124 provides a ligand contact to substrate; sequence YW. Asn-164 is a binding site for Ca(2+). Residues His-165 and 217–220 each bind substrate; that span reads NLFN. Residue Asp-223 participates in Ca(2+) binding. Arg-251 contacts substrate. The active-site Nucleophile is the Asp-253. 256 to 257 is a substrate binding site; the sequence is KH. A Ca(2+)-binding site is contributed by His-257. Glu-287 (proton donor) is an active-site residue. Residues His-362, Asp-436, and Arg-440 each contribute to the substrate site. Residues 554-655 form the CBM20 domain; the sequence is AENPTVQSIN…NDTQTTNGSF (102 aa). A disordered region spans residues 630–655; the sequence is TANVEWQSGANNQFNSNDTQTTNGSF.

The protein belongs to the glycosyl hydrolase 13 family. In terms of assembly, monomer. Ca(2+) serves as cofactor.

The enzyme catalyses Cyclizes part of a (1-&gt;4)-alpha-D-glucan chain by formation of a (1-&gt;4)-alpha-D-glucosidic bond.. In Klebsiella oxytoca, this protein is Cyclomaltodextrin glucanotransferase (cgt).